A 57-amino-acid chain; its full sequence is COP9 signalosome complex subunit 9 (57 aa).

Position 26 is a phosphothreonine (Thr-26).

The protein belongs to the CSN9 family. As to quaternary structure, component of the CSN complex, composed of COPS1/GPS1, COPS2, COPS3, COPS4, COPS5, COPS6, COPS7 (COPS7A or COPS7B), COPS8 and COPS9. In the complex, it interacts directly with COPS3, COPS5 and COPS6.

The protein resides in the nucleus. It localises to the cytoplasm. The protein localises to the nucleoplasm. Functionally, component of the COP9 signalosome complex (CSN), a complex involved in various cellular and developmental processes. The CSN complex is an essential regulator of the ubiquitin (Ubl) conjugation pathway by mediating the deneddylation of the cullin subunits of SCF-type E3 ligase complexes, leading to decrease the Ubl ligase activity of SCF-type complexes such as SCF, CSA or DDB2. The complex is also involved in phosphorylation of p53/TP53, c-jun/JUN, IkappaBalpha/NFKBIA, ITPK1 and IRF8/ICSBP, possibly via its association with CK2 and PKD kinases. CSN-dependent phosphorylation of TP53 and JUN promotes and protects degradation by the Ubl system, respectively. Plays a role in cell proliferation. This Mus musculus (Mouse) protein is COP9 signalosome complex subunit 9.